The primary structure comprises 144 residues: Maximins z/Hv (144 aa).

The signal sequence occupies residues 1–18 (MNFKYIVAVSFLIASGYA). The propeptide occupies 19 to 43 (RSEENDVQSLSQREVLEEESLREIR). Asn70 is modified (asparagine amide). The propeptide occupies 74–123 (TAEDHEVMKRLKAVMRDLDSLDHPEEASERETRGFNQEEIANLFTKKEKR). Ile143 bears the Isoleucine amide mark.

This sequence belongs to the bombinin family. As to expression, expressed by the skin glands.

Its subcellular location is the secreted. In terms of biological role, maximin-z shows antimicrobial activity against bacteria and against the fungus C.albicans. It has little hemolytic activity. Functionally, maximin-Hv shows antimicrobial activity against bacteria and against the fungus C.albicans. Shows strong hemolytic activity. This is Maximins z/Hv from Bombina maxima (Giant fire-bellied toad).